A 464-amino-acid polypeptide reads, in one-letter code: tRNA modification GTPase MnmE (464 aa).

Arg25, Glu87, and Lys130 together coordinate (6S)-5-formyl-5,6,7,8-tetrahydrofolate. In terms of domain architecture, TrmE-type G spans 226–386; that stretch reads GLSVVLAGQP…LREELLRIAG (161 aa). Residue Asn236 participates in K(+) binding. Residues 236–241, 255–261, and 280–283 contribute to the GTP site; these read NVGKSS, TPIAGTT, and DTAG. Ser240 contributes to the Mg(2+) binding site. K(+)-binding residues include Thr255, Ile257, and Thr260. Residue Thr261 coordinates Mg(2+). Lys464 lines the (6S)-5-formyl-5,6,7,8-tetrahydrofolate pocket.

The protein belongs to the TRAFAC class TrmE-Era-EngA-EngB-Septin-like GTPase superfamily. TrmE GTPase family. As to quaternary structure, homodimer. Heterotetramer of two MnmE and two MnmG subunits. Requires K(+) as cofactor.

It is found in the cytoplasm. In terms of biological role, exhibits a very high intrinsic GTPase hydrolysis rate. Involved in the addition of a carboxymethylaminomethyl (cmnm) group at the wobble position (U34) of certain tRNAs, forming tRNA-cmnm(5)s(2)U34. The sequence is that of tRNA modification GTPase MnmE from Paraburkholderia xenovorans (strain LB400).